Reading from the N-terminus, the 456-residue chain is PTS system sucrose-specific EIIBC component (456 aa).

Positions 4–87 (EQISRSLLPL…IQAAGISESS (84 aa)) constitute a PTS EIIB type-1 domain. Residue Cys-26 is the Phosphocysteine intermediate; for EIIB activity of the active site. The PTS EIIC type-1 domain maps to 107–456 (RLLSNIFVPI…LTLKYKTDAE (350 aa)). The next 10 membrane-spanning stretches (helical) occupy residues 112–132 (IFVP…LLGM), 144–164 (ALYI…PILI), 181–201 (TLGG…AAGF), 209–229 (IEVA…AVWF), 247–267 (LILT…LLIG), 288–308 (AGWL…ITGI), 329–349 (FLLP…FAVW), 360–380 (ITLP…IFGI), 388–408 (FIAA…MHVY), and 428–448 (LLNY…LSLT).

The protein resides in the cell inner membrane. The enzyme catalyses N(pros)-phospho-L-histidyl-[protein](out) + sucrose = sucrose 6(G)-phosphate(in) + L-histidyl-[protein]. In terms of biological role, the phosphoenolpyruvate-dependent sugar phosphotransferase system (sugar PTS), a major carbohydrate active transport system, catalyzes the phosphorylation of incoming sugar substrates concomitantly with their translocation across the cell membrane. This system is involved in sucrose transport. This chain is PTS system sucrose-specific EIIBC component, found in Klebsiella pneumoniae.